The sequence spans 398 residues: Inner membrane protein YjgN (398 aa).

At 1 to 24 the chain is on the cytoplasmic side; the sequence is MAQVINEMDVPSHSFVFHGTGERY. A helical transmembrane segment spans residues 25-45; sequence FLICVVNVLLTIITLGIYLPW. Topologically, residues 46-73 are periplasmic; it reads ALMKCKRYLYANMEVNGQRFSYGITGGN. Residues 74 to 94 form a helical membrane-spanning segment; the sequence is VFFSCLVFVFFYFAILMTVSA. Residue D95 is a topological domain, cytoplasmic. The chain crosses the membrane as a helical span at residues 96–116; the sequence is MPLIGCVLTLSLLVLLIFMAA. The Periplasmic portion of the chain corresponds to 117–142; sequence KGLRYQALMTSLNGVRFSFNCSMKGV. Residues 143–163 form a helical membrane-spanning segment; it reads WWVTFFLPILMAIGMGTVFFI. The Cytoplasmic portion of the chain corresponds to 164 to 175; that stretch reads STKMLHANSSSS. Residues 176 to 196 form a helical membrane-spanning segment; that stretch reads VIVSVVLMAIVGIVSIGIFNG. Residues 197-228 lie on the Periplasmic side of the membrane; the sequence is TLYSLVMSFLWSNTSFGIHRFKVKLDTAYCIK. Residues 229–249 form a helical membrane-spanning segment; that stretch reads YAILAFLALLPFLAVAGYIIF. Topologically, residues 250–278 are cytoplasmic; it reads DQILNAYDSSVYANDDIENLQQFMEMQRK. A helical membrane pass occupies residues 279–299; sequence MIIAQLIYYFGIAVSTSYLTV. Topologically, residues 300–333 are periplasmic; that stretch reads SLRNHFMSNLSLNDGRIRFRSTLTYHGMLYRMCA. A helical membrane pass occupies residues 334-354; it reads LVVISGITGGLAYPLLKIWMI. At 355-398 the chain is on the cytoplasmic side; it reads DWQAKNTYLLGDLDDLPLINKEEQPDKGFLASISRGIMPSLPFL.

It is found in the cell inner membrane. In Escherichia coli O157:H7, this protein is Inner membrane protein YjgN (yjgN).